Here is a 39-residue protein sequence, read N- to C-terminus: MSDVGRVPLWMVATVGGLAAGGLLILFVFGSYSGLGSSL.

The chain crosses the membrane as a helical span at residues 9 to 29 (LWMVATVGGLAAGGLLILFVF).

It belongs to the PsbJ family. In terms of assembly, PSII is composed of 1 copy each of membrane proteins PsbA, PsbB, PsbC, PsbD, PsbE, PsbF, PsbH, PsbI, PsbJ, PsbK, PsbL, PsbM, PsbT, PsbX, PsbY, PsbZ, Psb30/Ycf12, at least 3 peripheral proteins of the oxygen-evolving complex and a large number of cofactors. It forms dimeric complexes.

It is found in the plastid. Its subcellular location is the chloroplast thylakoid membrane. Its function is as follows. One of the components of the core complex of photosystem II (PSII). PSII is a light-driven water:plastoquinone oxidoreductase that uses light energy to abstract electrons from H(2)O, generating O(2) and a proton gradient subsequently used for ATP formation. It consists of a core antenna complex that captures photons, and an electron transfer chain that converts photonic excitation into a charge separation. The protein is Photosystem II reaction center protein J of Emiliania huxleyi (Coccolithophore).